A 123-amino-acid polypeptide reads, in one-letter code: uncharacterized protein (123 aa).

A helical membrane pass occupies residues 14-34; that stretch reads VVLKITAVVCSVFSIRVLILA.

It is found in the membrane. This is an uncharacterized protein from Saccharomyces cerevisiae (strain ATCC 204508 / S288c) (Baker's yeast).